Here is a 408-residue protein sequence, read N- to C-terminus: Probable acyl-CoA dehydrogenase 6 (408 aa).

The active-site Proton acceptor is the E265.

It belongs to the acyl-CoA dehydrogenase family. As to quaternary structure, homotetramer. FAD is required as a cofactor.

It catalyses the reaction 3-methylbutanoyl-CoA + oxidized [electron-transfer flavoprotein] + H(+) = 3-methylbut-2-enoyl-CoA + reduced [electron-transfer flavoprotein]. Its pathway is amino-acid degradation; L-leucine degradation; (S)-3-hydroxy-3-methylglutaryl-CoA from 3-isovaleryl-CoA: step 1/3. In Caenorhabditis elegans, this protein is Probable acyl-CoA dehydrogenase 6 (acdh-6).